The primary structure comprises 206 residues: MQLELLNDQGQAASKIDVPETVFDRQYNEDLIHQIVVAYRANARQGTRAQKDREQVRHSTKKPFKQKGTGNARAGMTSSPLWRGGGRIFPNLPEENFTQKINKKMYRAGMASILSQLAREGRLAVVDSLKVETPKTKVLADKFKAMNLQSVMVISDEVDENLYLASRNLKNVFVVEPRYADPVSLVHYKKVLVTKGAIDKLKEMFA.

Residues 46–77 (GTRAQKDREQVRHSTKKPFKQKGTGNARAGMT) form a disordered region.

It belongs to the universal ribosomal protein uL4 family. As to quaternary structure, part of the 50S ribosomal subunit.

In terms of biological role, one of the primary rRNA binding proteins, this protein initially binds near the 5'-end of the 23S rRNA. It is important during the early stages of 50S assembly. It makes multiple contacts with different domains of the 23S rRNA in the assembled 50S subunit and ribosome. Its function is as follows. Forms part of the polypeptide exit tunnel. This is Large ribosomal subunit protein uL4 from Paracidovorax citrulli (strain AAC00-1) (Acidovorax citrulli).